We begin with the raw amino-acid sequence, 337 residues long: Inositol 2-dehydrogenase (337 aa).

It belongs to the Gfo/Idh/MocA family. Homotetramer.

It carries out the reaction myo-inositol + NAD(+) = scyllo-inosose + NADH + H(+). Its function is as follows. Involved in the oxidation of myo-inositol (MI) to 2-keto-myo-inositol (2KMI or 2-inosose). In Gluconacetobacter diazotrophicus (strain ATCC 49037 / DSM 5601 / CCUG 37298 / CIP 103539 / LMG 7603 / PAl5), this protein is Inositol 2-dehydrogenase.